A 244-amino-acid polypeptide reads, in one-letter code: rRNA adenine N-6-methyltransferase (244 aa).

S-adenosyl-L-methionine-binding residues include asparagine 11, isoleucine 13, glycine 38, glutamate 59, aspartate 84, and asparagine 101.

Belongs to the class I-like SAM-binding methyltransferase superfamily. rRNA adenine N(6)-methyltransferase family.

The catalysed reaction is adenosine(2085) in 23S rRNA + 2 S-adenosyl-L-methionine = N(6)-dimethyladenosine(2085) in 23S rRNA + 2 S-adenosyl-L-homocysteine + 2 H(+). This protein produces a dimethylation of the adenine residue at position 2085 in 23S rRNA, resulting in reduced affinity between ribosomes and macrolide-lincosamide-streptogramin B antibiotics. The chain is rRNA adenine N-6-methyltransferase (ermC) from Staphylococcus aureus.